The following is a 106-amino-acid chain: GQPKAAPSVTLFPPSSEELQANKATLVCLISDFYPGAVTVAWKADSSPVKAGVETTTPSKQSNNKYAASSYLSLTPEQWKSHRSYSCQVTHEGSTVEKTVAPTECS.

In terms of domain architecture, Ig-like spans 7–101 (PSVTLFPPSS…EGSTVEKTVA (95 aa)). Cysteines 28 and 87 form a disulfide.

In terms of assembly, immunoglobulins are composed of two identical heavy chains and two identical light chains; disulfide-linked.

Its subcellular location is the secreted. The protein localises to the cell membrane. Functionally, constant region of immunoglobulin light chains. Immunoglobulins, also known as antibodies, are membrane-bound or secreted glycoproteins produced by B lymphocytes. In the recognition phase of humoral immunity, the membrane-bound immunoglobulins serve as receptors which, upon binding of a specific antigen, trigger the clonal expansion and differentiation of B lymphocytes into immunoglobulins-secreting plasma cells. Secreted immunoglobulins mediate the effector phase of humoral immunity, which results in the elimination of bound antigens. The antigen binding site is formed by the variable domain of one heavy chain, together with that of its associated light chain. Thus, each immunoglobulin has two antigen binding sites with remarkable affinity for a particular antigen. The variable domains are assembled by a process called V-(D)-J rearrangement and can then be subjected to somatic hypermutations which, after exposure to antigen and selection, allow affinity maturation for a particular antigen. This is Immunoglobulin lambda constant 2 from Homo sapiens (Human).